Here is a 153-residue protein sequence, read N- to C-terminus: Ribonuclease H (153 aa).

Residues 7 to 148 (PADLVEMWTD…ADMLANQGVA (142 aa)) form the RNase H type-1 domain. Mg(2+) contacts are provided by aspartate 16, glutamate 54, aspartate 76, and aspartate 140.

It belongs to the RNase H family. As to quaternary structure, monomer. The cofactor is Mg(2+).

The protein localises to the cytoplasm. It carries out the reaction Endonucleolytic cleavage to 5'-phosphomonoester.. Functionally, endonuclease that specifically degrades the RNA of RNA-DNA hybrids. The chain is Ribonuclease H from Bordetella avium (strain 197N).